Reading from the N-terminus, the 147-residue chain is MRDNTIGSLIWLRLIRFTNQSNQMSNEFLKRFDLTTAQFDVLLQIRTYQPLTQMELAEKVTVTQGGISRMLTRLEKEGYIVRKQDWKTKTISLTEQGEAALERALPEQLAFQSSFFDDVLNEEEQKILYELMTKVHKHSEKKELPQE.

The region spanning 1-137 is the HTH marR-type domain; it reads MRDNTIGSLI…LYELMTKVHK (137 aa). The segment at residues 53 to 76 is a DNA-binding region (H-T-H motif); sequence QMELAEKVTVTQGGISRMLTRLEK.

This is an uncharacterized protein from Bacillus thuringiensis subsp. konkukian (strain 97-27).